Reading from the N-terminus, the 188-residue chain is dCTP deaminase (188 aa).

Residues 111-116 (KSTYAR), 135-137 (TLE), Gln156, Tyr170, and Gln180 each bind dCTP. Glu137 serves as the catalytic Proton donor/acceptor.

Belongs to the dCTP deaminase family. As to quaternary structure, homotrimer.

It catalyses the reaction dCTP + H2O + H(+) = dUTP + NH4(+). The protein operates within pyrimidine metabolism; dUMP biosynthesis; dUMP from dCTP (dUTP route): step 1/2. In terms of biological role, catalyzes the deamination of dCTP to dUTP. The polypeptide is dCTP deaminase (Cupriavidus taiwanensis (strain DSM 17343 / BCRC 17206 / CCUG 44338 / CIP 107171 / LMG 19424 / R1) (Ralstonia taiwanensis (strain LMG 19424))).